We begin with the raw amino-acid sequence, 1313 residues long: Kinesin-like protein KIN-12B (1313 aa).

The interval 1-74 (MKHFMMPRNA…PPRPPSSNPL (74 aa)) is disordered. Over residues 17–26 (ESQSPNPSLT) the composition is skewed to polar residues. Positions 96–431 (GVKVIVRMKP…LRFAQRAKAI (336 aa)) constitute a Kinesin motor domain. 170-177 (GQTGSGKT) contacts ATP. 3 microtubules-binding regions span residues 298–302 (SSRSH), 331–337 (VDLAGSE), and 380–384 (HIPYR). The segment at 429-467 (KAIQNKAIVNEVMQDDVNFLREVIRQLRDELQRVKDDKG) is neck. A disordered region spans residues 685 to 709 (ESASPKIRNSRKSLRTTSMSTASQK). Positions 699 to 708 (RTTSMSTASQ) are enriched in polar residues. Coiled coils occupy residues 932–1003 (LDEE…YTDS), 1062–1130 (AEEL…RIRE), and 1167–1241 (EKEV…TEIS).

This sequence belongs to the TRAFAC class myosin-kinesin ATPase superfamily. Kinesin family. KIN-12 subfamily. Homodimer and heterodimer with KIN12A. Interacts with TIO.

It is found in the cytoplasm. The protein localises to the cytoskeleton. Its subcellular location is the phragmoplast. Functionally, plus-end directed kinesin-like motor enzyme that plays a critical role in the organization of phragmoplast microtubules during cytokinesis. Constitutes a signaling module in association with serine/threonine-protein kinase TIO that is required to support phragmoplast expansion and cell-plate growth in plant cells. In Arabidopsis thaliana (Mouse-ear cress), this protein is Kinesin-like protein KIN-12B.